The chain runs to 522 residues: Anti-sigma-I factor RsgI4 (522 aa).

Residues 1–51 (MNLGVVIKIKRKKAIIVTETGEFKAVNARNGMFLGQKILFDQQDVIENNRN) lie on the Cytoplasmic side of the membrane. A RsgI N-terminal anti-sigma domain is found at 2–49 (NLGVVIKIKRKKAIIVTETGEFKAVNARNGMFLGQKILFDQQDVIENN). The chain crosses the membrane as a helical span at residues 52-72 (GIGLAYSAAIAGMVAVFVFMF). At 73–522 (TYFGLHNFNG…SGILKWGREP (450 aa)) the chain is on the extracellular side. Low complexity predominate over residues 311 to 361 (SAKTPERATTVPVNTPVKPTDAPTKSPATATATATRAPVKATATPAKTLKP). The disordered stretch occupies residues 311–371 (SAKTPERATT…SDTPVKTPDG (61 aa)). The region spanning 371–522 (GEQSVKVRFY…SGILKWGREP (152 aa)) is the CBM3 domain.

As to quaternary structure, interacts (via RsgI N-terminal anti-sigma domain) with SigI4.

It is found in the cell membrane. In terms of biological role, anti-sigma factor for SigI4. Negatively regulates SigI4 activity through direct interaction. Binding of the polysaccharide substrate to the extracellular C-terminal sensing domain of RsgI4 may induce a conformational change in its N-terminal cytoplasmic region, leading to the release and activation of SigI4. This chain is Anti-sigma-I factor RsgI4, found in Acetivibrio thermocellus (strain ATCC 27405 / DSM 1237 / JCM 9322 / NBRC 103400 / NCIMB 10682 / NRRL B-4536 / VPI 7372) (Clostridium thermocellum).